A 1023-amino-acid chain; its full sequence is Sodium/potassium-transporting ATPase subunit alpha-1 (1023 aa).

Positions 1-5 (MGKGV) are excised as a propeptide. A compositionally biased stretch (basic and acidic residues) spans 1-11 (MGKGVGRDKYE). A disordered region spans residues 1 to 38 (MGKGVGRDKYEPAAVSEHGDKKGKKAKKERDMDELKKE). Topologically, residues 6–87 (GRDKYEPAAV…NALTPPPTTP (82 aa)) are cytoplasmic. The residue at position 9 (Lys-9) is an N6-acetyllysine. Position 10 is a phosphotyrosine (Tyr-10). Ser-16 is modified (phosphoserine; by PKC). The residue at position 21 (Lys-21) is an N6-acetyllysine. The segment covering 28–38 (KERDMDELKKE) has biased composition (basic and acidic residues). Ser-40 and Ser-47 each carry phosphoserine. The tract at residues 82–84 (PPP) is phosphoinositide-3 kinase binding. The chain crosses the membrane as a helical span at residues 88-108 (EWVKFCRQLFGGFSMLLWIGA). Residues 109-131 (ILCFLAYGILAATEEDFDNDNLY) are Extracellular-facing. A helical transmembrane segment spans residues 132–152 (LGVVLAAVVIITGCFSYYQEA). Residues 153 to 288 (KSSKIMESFK…GGQTPIAAEI (136 aa)) are Cytoplasmic-facing. The interval 216-235 (SSLTGESEPQTRSPDFTNEN) is disordered. Ser-228 is subject to Phosphoserine. Tyr-260 is subject to Phosphotyrosine. Residues 289–308 (EHFIHIITGVAVFLGVSFFI) form a helical membrane-spanning segment. The Extracellular segment spans residues 309 to 320 (LSLILEYTWLEA). A helical transmembrane segment spans residues 321–338 (VIFLIGIIVANVPEGLLA). Over 339–772 (TVTVCLTLTA…EEGRLIFDNL (434 aa)) the chain is Cytoplasmic. Catalysis depends on Asp-376, which acts as the 4-aspartylphosphate intermediate. Phosphoserine is present on residues Ser-452 and Ser-484. Position 487 (Lys-487) interacts with ATP. Tyr-542 bears the Phosphotyrosine mark. Positions 596 to 717 (RAAVPDAVGK…QGAIVAVTGD (122 aa)) are mediates interaction with SCN7A. Residue Lys-661 is modified to N6-succinyllysine. 2 positions are modified to phosphoserine: Ser-668 and Ser-675. Residues Asp-717 and Asp-721 each contribute to the Mg(2+) site. A helical membrane pass occupies residues 773–792 (KKSIAYTLTSNIPEITPFLI). The Extracellular segment spans residues 793 to 802 (FIIANIPLPL). The helical transmembrane segment at 803–823 (GTVTILCIDLGTDMVPAISLA) threads the bilayer. Over 824–843 (YEQAESDIMKRQPRNPKTDK) the chain is Cytoplasmic. Residues 844 to 866 (LVNERLISMAYGQIGMIQALGGF) form a helical membrane-spanning segment. Topologically, residues 867 to 918 (FTYFVILAENGFLPFHLLGIRVDWDDRWINDVEDSYGQQWTYEQRKIVEFTC) are extracellular. Residues 919 to 938 (HTAFFVSIVVVQWADLVICK) form a helical membrane-spanning segment. The Cytoplasmic segment spans residues 939-951 (TRRNSVFQQGMKN). Position 943 is a phosphoserine; by PKA (Ser-943). The helical transmembrane segment at 952-970 (KILIFGLFEETALAAFLSY) threads the bilayer. Topologically, residues 971 to 985 (CPGMGVALRMYPLKP) are extracellular. Residues 986 to 1006 (TWWFCAFPYSLLIFVYDEIRK) form a helical membrane-spanning segment. Residues 1007 to 1023 (LIIRRRPGGWVEKETYY) are Cytoplasmic-facing.

Belongs to the cation transport ATPase (P-type) (TC 3.A.3) family. Type IIC subfamily. In terms of assembly, the sodium/potassium-transporting ATPase is composed of a catalytic alpha subunit, an auxiliary non-catalytic beta subunit and an additional regulatory subunit. Interacts with regulatory subunit FXYD1. Interacts with regulatory subunit FXYD3. Interacts with SIK1. Interacts with SLC35G1 and STIM1. Interacts with CLN3; this interaction regulates the sodium/potassium-transporting ATPase complex localization at the plasma membrane. Interacts with SCN7A; activates ATP1A1 P-type sodium:potassium-exchanging transporter activity which indirectly signals to nearby neurons to regulate sodium homeostasis. In terms of processing, phosphorylation on Tyr-10 modulates pumping activity. Phosphorylation of Ser-943 by PKA modulates the response of ATP1A1 to PKC. Dephosphorylation by protein phosphatase 2A (PP2A) following increases in intracellular sodium, leading to increase catalytic activity. As to expression, expressed in endocardial endothelial cells.

The protein resides in the cell membrane. The protein localises to the basolateral cell membrane. It is found in the sarcolemma. Its subcellular location is the cell projection. It localises to the axon. The protein resides in the melanosome. The catalysed reaction is K(+)(out) + Na(+)(in) + ATP + H2O = K(+)(in) + Na(+)(out) + ADP + phosphate + H(+). This is the catalytic component of the active enzyme, which catalyzes the hydrolysis of ATP coupled with the exchange of sodium and potassium ions across the plasma membrane. This action creates the electrochemical gradient of sodium and potassium ions, providing the energy for active transport of various nutrients. Could also be part of an osmosensory signaling pathway that senses body-fluid sodium levels and controls salt intake behavior as well as voluntary water intake to regulate sodium homeostasis. This Oryctolagus cuniculus (Rabbit) protein is Sodium/potassium-transporting ATPase subunit alpha-1 (ATP1A1).